We begin with the raw amino-acid sequence, 517 residues long: Putative thymidine phosphorylase (517 aa).

This sequence belongs to the thymidine/pyrimidine-nucleoside phosphorylase family. Type 2 subfamily.

It catalyses the reaction thymidine + phosphate = 2-deoxy-alpha-D-ribose 1-phosphate + thymine. This chain is Putative thymidine phosphorylase, found in Legionella pneumophila (strain Paris).